Consider the following 404-residue polypeptide: Chorismate synthase (404 aa).

Arg47 provides a ligand contact to NADP(+). FMN-binding positions include 156–158 (RSS), 281–282 (NA), Gly321, 336–340 (KPTST), and Arg363.

It belongs to the chorismate synthase family. Homotetramer. FMNH2 serves as cofactor.

It carries out the reaction 5-O-(1-carboxyvinyl)-3-phosphoshikimate = chorismate + phosphate. It functions in the pathway metabolic intermediate biosynthesis; chorismate biosynthesis; chorismate from D-erythrose 4-phosphate and phosphoenolpyruvate: step 7/7. In terms of biological role, catalyzes the anti-1,4-elimination of the C-3 phosphate and the C-6 proR hydrogen from 5-enolpyruvylshikimate-3-phosphate (EPSP) to yield chorismate, which is the branch point compound that serves as the starting substrate for the three terminal pathways of aromatic amino acid biosynthesis. This reaction introduces a second double bond into the aromatic ring system. This Rhodopirellula baltica (strain DSM 10527 / NCIMB 13988 / SH1) protein is Chorismate synthase.